Here is a 408-residue protein sequence, read N- to C-terminus: Multidrug resistance protein MdtG (408 aa).

Helical transmembrane passes span 16 to 36 (LIVAWLGCFLTGAAFSLVMPF), 58 to 78 (IVFSITFLFSAIASPFWGGLA), 92 to 112 (LGMGIVMVLMGLAQNIWQFLI), 115 to 135 (ALLGLLGGFVPNANALIATQV), 146 to 166 (TLSTGGVSGALLGPMAGGLLA), 173 to 193 (PVFFITASVLILCFFVTLFCI), 221 to 241 (ILSLFVTTLIIQVATGSIAPI), 256 to 276 (VAFISGMIASVPGVAALLSAP), 290 to 310 (ILITALIFSVLLLIPMSYVQT), and 378 to 398 (AVFLVTAGVVLFNAVYSWNSL).

This sequence belongs to the major facilitator superfamily. DHA1 family. MdtG (TC 2.A.1.2.20) subfamily.

Its subcellular location is the cell inner membrane. Confers resistance to fosfomycin and deoxycholate. The chain is Multidrug resistance protein MdtG from Escherichia coli (strain SMS-3-5 / SECEC).